A 145-amino-acid chain; its full sequence is UPF0179 protein Maeo_1037 (145 aa).

This sequence belongs to the UPF0179 family.

The sequence is that of UPF0179 protein Maeo_1037 from Methanococcus aeolicus (strain ATCC BAA-1280 / DSM 17508 / OCM 812 / Nankai-3).